Consider the following 94-residue polypeptide: Small ribosomal subunit protein uS19 (94 aa).

The protein belongs to the universal ribosomal protein uS19 family.

Functionally, protein S19 forms a complex with S13 that binds strongly to the 16S ribosomal RNA. In Wolbachia pipientis wMel, this protein is Small ribosomal subunit protein uS19.